Here is a 98-residue protein sequence, read N- to C-terminus: NADH-ubiquinone oxidoreductase chain 4L (98 aa).

Helical transmembrane passes span 1–21 (MSLT…GLLM), 29–49 (SLLC…ITIL), and 61–81 (IILL…LVMV).

The protein belongs to the complex I subunit 4L family. In terms of assembly, core subunit of respiratory chain NADH dehydrogenase (Complex I) which is composed of 45 different subunits.

The protein localises to the mitochondrion inner membrane. The enzyme catalyses a ubiquinone + NADH + 5 H(+)(in) = a ubiquinol + NAD(+) + 4 H(+)(out). Core subunit of the mitochondrial membrane respiratory chain NADH dehydrogenase (Complex I) which catalyzes electron transfer from NADH through the respiratory chain, using ubiquinone as an electron acceptor. Part of the enzyme membrane arm which is embedded in the lipid bilayer and involved in proton translocation. This Mystacina tuberculata (New Zealand lesser short-tailed bat) protein is NADH-ubiquinone oxidoreductase chain 4L (MT-ND4L).